A 493-amino-acid polypeptide reads, in one-letter code: Cytochrome P450 monooxygenase astA (493 aa).

The helical transmembrane segment at Glu5–Tyr25 threads the bilayer. N-linked (GlcNAc...) asparagine glycans are attached at residues Asn174 and Asn286. Cys433 contributes to the heme binding site.

The protein belongs to the cytochrome P450 family. Requires heme as cofactor.

It is found in the membrane. It carries out the reaction asperterpenoid A + reduced [NADPH--hemoprotein reductase] + O2 = asperterpenoid C + oxidized [NADPH--hemoprotein reductase] + H2O + H(+). It functions in the pathway secondary metabolite biosynthesis; terpenoid biosynthesis. Its function is as follows. Cytochrome P450 monooxygenase; part of the gene cluster that mediates the biosynthesis of the asperterpenoids, sesterterpenes that exhibit anti-tuberculosis activity. The first step of the pathway is performed by the sesterterpene synthase astC that possesses both prenyl transferase and terpene cyclase activity, converting isopentenyl diphosphate and dimethylallyl diphosphate into geranylfarnesyl diphosphate (GFPP) and further converting GFPP into preasperterpenoid A, respectively. The cytochrome P450 monooxygenase astB then dually oxidizes preasperterpenoid A to produce asperterpenoid A along with a minor product, asperterpenoid B. Finally, the cytochrome P450 monooxygenase astA converts asperterpenoid A into asperterpenoid C. The sequence is that of Cytochrome P450 monooxygenase astA from Talaromyces wortmannii (Penicillium wortmannii).